We begin with the raw amino-acid sequence, 568 residues long: Probable inactive poly [ADP-ribose] polymerase SRO1 (568 aa).

Residues 1–18 are compositionally biased toward basic and acidic residues; it reads MEAKIVKVSDSSYKDGLG. Positions 1–32 are disordered; sequence MEAKIVKVSDSSYKDGLGKKRKHPGNYTPYDS. Positions 77–152 constitute a WWE domain; that stretch reads RYFSYYKKTG…ETGVKTQLAW (76 aa). Disordered regions lie at residues 220–241 and 453–500; these read DFQAVQRSSNGPNDEASEDSCS and ILPT…RRPR. The region spanning 245–463 is the PARP catalytic domain; the sequence is DDAVEKWDKT…LPTTQSRHES (219 aa). Residues 497–568 form the RST domain; the sequence is RRPRSPIMPF…TITGLQRSLG (72 aa).

In terms of assembly, interacts with DREB2A, DREB2B, DREB2C and NAC082. In terms of tissue distribution, expressed in young developing tissues, such as young leaves and flowers and root tips. In mature plants, expressed in vasculature of leaves and roots.

The protein resides in the nucleus matrix. Functionally, probable inactive ADP-ribosyltransferase that functions with RCD1 to regulate oxidative stress, hormonal and developmental responses. May regulate some stress-responsive genes. Seems to play a smaller developmental role than R. This Arabidopsis thaliana (Mouse-ear cress) protein is Probable inactive poly [ADP-ribose] polymerase SRO1 (SRO1).